Reading from the N-terminus, the 596-residue chain is Aspartate--tRNA(Asp/Asn) ligase (596 aa).

E172 serves as a coordination point for L-aspartate. Positions 196 to 199 (QLFK) are aspartate. R218 contributes to the L-aspartate binding site. ATP contacts are provided by residues 218 to 220 (RDE) and Q227. H450 is an L-aspartate binding site. E484 contributes to the ATP binding site. R491 contacts L-aspartate. 536–539 (GLDR) provides a ligand contact to ATP.

Belongs to the class-II aminoacyl-tRNA synthetase family. Type 1 subfamily. As to quaternary structure, homodimer.

The protein localises to the cytoplasm. It catalyses the reaction tRNA(Asx) + L-aspartate + ATP = L-aspartyl-tRNA(Asx) + AMP + diphosphate. In terms of biological role, aspartyl-tRNA synthetase with relaxed tRNA specificity since it is able to aspartylate not only its cognate tRNA(Asp) but also tRNA(Asn). Reaction proceeds in two steps: L-aspartate is first activated by ATP to form Asp-AMP and then transferred to the acceptor end of tRNA(Asp/Asn). This Acidithiobacillus ferrooxidans (strain ATCC 23270 / DSM 14882 / CIP 104768 / NCIMB 8455) (Ferrobacillus ferrooxidans (strain ATCC 23270)) protein is Aspartate--tRNA(Asp/Asn) ligase.